The sequence spans 281 residues: 4-diphosphocytidyl-2-C-methyl-D-erythritol kinase (281 aa).

Active-site residues include lysine 11 and aspartate 138.

It belongs to the GHMP kinase family. IspE subfamily.

It catalyses the reaction 4-CDP-2-C-methyl-D-erythritol + ATP = 4-CDP-2-C-methyl-D-erythritol 2-phosphate + ADP + H(+). The protein operates within isoprenoid biosynthesis; isopentenyl diphosphate biosynthesis via DXP pathway; isopentenyl diphosphate from 1-deoxy-D-xylulose 5-phosphate: step 3/6. Catalyzes the phosphorylation of the position 2 hydroxy group of 4-diphosphocytidyl-2C-methyl-D-erythritol. The chain is 4-diphosphocytidyl-2-C-methyl-D-erythritol kinase from Pelagibacter ubique (strain HTCC1062).